The sequence spans 130 residues: Small ribosomal subunit protein uS11c (130 aa).

Belongs to the universal ribosomal protein uS11 family. In terms of assembly, part of the 30S ribosomal subunit.

The protein resides in the plastid. It is found in the chloroplast. In Mesostigma viride (Green alga), this protein is Small ribosomal subunit protein uS11c.